A 446-amino-acid polypeptide reads, in one-letter code: MENISDLWNSALKELEKKVSKPSYETWLKSTTAHNLKKDVLTITAPNEFARDWLESHYSELISETLYDLTGAKLAIRFIIPQSQAEEEIDLPPSKPNSAQDDSNHLPQSMLNPKYTFDTFVIGSGNRFAHAASLAVAEAPAKAYNPLFIYGGVGLGKTHLMHAIGHYVIEHNPNAKVVYLSSEKFTNEFINSIRDNKAVDFRNKYRNVDVLLIDDIQFLAGKEQTQEEFFHTFNALHEESKQIVISSDRPPKEIPTLEDRLRSRFEWGLITDITPPDLETRIAILRKKAKAEGLDIPNEVMLYIANQIDSNIRELEGALIRVVAYSSLINKDINADLAAEALKDIIPNSKPKIISIYDIQKAVGDVYQVKLEDFKAKKRTKSVAFPRQIAMYLSRELTDSSLPKIGEEFGGRDHTTVIHAHEKISKLLKTDTQLQKQVEEINDILK.

A domain I, interacts with DnaA modulators region spans residues 1–92; the sequence is MENISDLWNS…SQAEEEIDLP (92 aa). Positions 87 to 107 are disordered; sequence EEIDLPPSKPNSAQDDSNHLP. Residues 93 to 109 are domain II; it reads PSKPNSAQDDSNHLPQS. Positions 96 to 107 are enriched in polar residues; the sequence is PNSAQDDSNHLP. Residues 110–326 form a domain III, AAA+ region region; it reads MLNPKYTFDT…GALIRVVAYS (217 aa). ATP is bound by residues Gly-154, Gly-156, Lys-157, and Thr-158. A domain IV, binds dsDNA region spans residues 327–446; sequence SLINKDINAD…QVEEINDILK (120 aa).

It belongs to the DnaA family. As to quaternary structure, oligomerizes as a right-handed, spiral filament on DNA at oriC.

The protein resides in the cytoplasm. Functionally, plays an essential role in the initiation and regulation of chromosomal replication. ATP-DnaA binds to the origin of replication (oriC) to initiate formation of the DNA replication initiation complex once per cell cycle. Binds the DnaA box (a 9 base pair repeat at the origin) and separates the double-stranded (ds)DNA. Forms a right-handed helical filament on oriC DNA; dsDNA binds to the exterior of the filament while single-stranded (ss)DNA is stabiized in the filament's interior. The ATP-DnaA-oriC complex binds and stabilizes one strand of the AT-rich DNA unwinding element (DUE), permitting loading of DNA polymerase. After initiation quickly degrades to an ADP-DnaA complex that is not apt for DNA replication. Binds acidic phospholipids. This chain is Chromosomal replication initiator protein DnaA, found in Bacillus cereus (strain ATCC 10987 / NRS 248).